Here is a 612-residue protein sequence, read N- to C-terminus: Dihydroxy-acid dehydratase (612 aa).

Asp-81 lines the Mg(2+) pocket. Cys-122 serves as a coordination point for [2Fe-2S] cluster. Mg(2+) is bound by residues Asp-123 and Lys-124. Position 124 is an N6-carboxylysine (Lys-124). Cys-195 contributes to the [2Fe-2S] cluster binding site. Mg(2+) is bound at residue Glu-491. Residue Ser-517 is the Proton acceptor of the active site.

Belongs to the IlvD/Edd family. As to quaternary structure, homodimer. Requires [2Fe-2S] cluster as cofactor. It depends on Mg(2+) as a cofactor.

The catalysed reaction is (2R)-2,3-dihydroxy-3-methylbutanoate = 3-methyl-2-oxobutanoate + H2O. It carries out the reaction (2R,3R)-2,3-dihydroxy-3-methylpentanoate = (S)-3-methyl-2-oxopentanoate + H2O. It functions in the pathway amino-acid biosynthesis; L-isoleucine biosynthesis; L-isoleucine from 2-oxobutanoate: step 3/4. It participates in amino-acid biosynthesis; L-valine biosynthesis; L-valine from pyruvate: step 3/4. In terms of biological role, functions in the biosynthesis of branched-chain amino acids. Catalyzes the dehydration of (2R,3R)-2,3-dihydroxy-3-methylpentanoate (2,3-dihydroxy-3-methylvalerate) into 2-oxo-3-methylpentanoate (2-oxo-3-methylvalerate) and of (2R)-2,3-dihydroxy-3-methylbutanoate (2,3-dihydroxyisovalerate) into 2-oxo-3-methylbutanoate (2-oxoisovalerate), the penultimate precursor to L-isoleucine and L-valine, respectively. This Sinorhizobium fredii (strain NBRC 101917 / NGR234) protein is Dihydroxy-acid dehydratase.